We begin with the raw amino-acid sequence, 278 residues long: S-formylglutathione hydrolase YeiG (278 aa).

Residues S145, D223, and H256 each act as charge relay system in the active site.

Belongs to the esterase D family.

It catalyses the reaction S-formylglutathione + H2O = formate + glutathione + H(+). Its function is as follows. Serine hydrolase involved in the detoxification of formaldehyde. Hydrolyzes S-formylglutathione to glutathione and formate. The protein is S-formylglutathione hydrolase YeiG (yeiG) of Escherichia coli (strain SMS-3-5 / SECEC).